The primary structure comprises 252 residues: 5-oxoprolinase subunit A (252 aa).

Belongs to the LamB/PxpA family. As to quaternary structure, forms a complex composed of PxpA, PxpB and PxpC.

It carries out the reaction 5-oxo-L-proline + ATP + 2 H2O = L-glutamate + ADP + phosphate + H(+). Its function is as follows. Catalyzes the cleavage of 5-oxoproline to form L-glutamate coupled to the hydrolysis of ATP to ADP and inorganic phosphate. The protein is 5-oxoprolinase subunit A of Mycolicibacterium gilvum (strain PYR-GCK) (Mycobacterium gilvum (strain PYR-GCK)).